Here is a 38-residue protein sequence, read N- to C-terminus: Photosystem II reaction center protein L (38 aa).

Residues 17-37 (SLYWGLLLIFVLAVLFSNYSF) traverse the membrane as a helical segment.

This sequence belongs to the PsbL family. In terms of assembly, PSII is composed of 1 copy each of membrane proteins PsbA, PsbB, PsbC, PsbD, PsbE, PsbF, PsbH, PsbI, PsbJ, PsbK, PsbL, PsbM, PsbT, PsbX, PsbY, PsbZ, Psb30/Ycf12, at least 3 peripheral proteins of the oxygen-evolving complex and a large number of cofactors. It forms dimeric complexes.

It is found in the plastid. Its subcellular location is the chloroplast thylakoid membrane. One of the components of the core complex of photosystem II (PSII). PSII is a light-driven water:plastoquinone oxidoreductase that uses light energy to abstract electrons from H(2)O, generating O(2) and a proton gradient subsequently used for ATP formation. It consists of a core antenna complex that captures photons, and an electron transfer chain that converts photonic excitation into a charge separation. This subunit is found at the monomer-monomer interface and is required for correct PSII assembly and/or dimerization. The polypeptide is Photosystem II reaction center protein L (Bowenia serrulata (Byfield fern)).